A 319-amino-acid polypeptide reads, in one-letter code: Beta-ketoacyl-[acyl-carrier-protein] synthase III (319 aa).

Residues cysteine 110 and histidine 246 contribute to the active site. Residues 247–251 are ACP-binding; it reads QANYR. Residue asparagine 276 is part of the active site.

This sequence belongs to the thiolase-like superfamily. FabH family. In terms of assembly, homodimer.

Its subcellular location is the cytoplasm. The catalysed reaction is malonyl-[ACP] + acetyl-CoA + H(+) = 3-oxobutanoyl-[ACP] + CO2 + CoA. Its pathway is lipid metabolism; fatty acid biosynthesis. In terms of biological role, catalyzes the condensation reaction of fatty acid synthesis by the addition to an acyl acceptor of two carbons from malonyl-ACP. Catalyzes the first condensation reaction which initiates fatty acid synthesis and may therefore play a role in governing the total rate of fatty acid production. Possesses both acetoacetyl-ACP synthase and acetyl transacylase activities. Its substrate specificity determines the biosynthesis of branched-chain and/or straight-chain of fatty acids. The protein is Beta-ketoacyl-[acyl-carrier-protein] synthase III of Lactobacillus delbrueckii subsp. bulgaricus (strain ATCC BAA-365 / Lb-18).